The chain runs to 662 residues: DNA ligase (662 aa).

NAD(+) contacts are provided by residues 31–35, 80–81, and Glu109; these read DYEYD and SL. Residue Lys111 is the N6-AMP-lysine intermediate of the active site. NAD(+)-binding residues include Arg132, Glu166, Lys282, and Lys306. Cys400, Cys403, Cys418, and Cys423 together coordinate Zn(2+). The 82-residue stretch at 581–662 folds into the BRCT domain; that stretch reads KVSNIFEGKT…FEEMLKGENI (82 aa).

This sequence belongs to the NAD-dependent DNA ligase family. LigA subfamily. Mg(2+) is required as a cofactor. Mn(2+) serves as cofactor.

It catalyses the reaction NAD(+) + (deoxyribonucleotide)n-3'-hydroxyl + 5'-phospho-(deoxyribonucleotide)m = (deoxyribonucleotide)n+m + AMP + beta-nicotinamide D-nucleotide.. In terms of biological role, DNA ligase that catalyzes the formation of phosphodiester linkages between 5'-phosphoryl and 3'-hydroxyl groups in double-stranded DNA using NAD as a coenzyme and as the energy source for the reaction. It is essential for DNA replication and repair of damaged DNA. The chain is DNA ligase from Thermoanaerobacter sp. (strain X514).